A 171-amino-acid chain; its full sequence is AP-3 complex subunit sigma (171 aa).

This sequence belongs to the adaptor complexes small subunit family. In terms of assembly, adaptor protein complex 3 (AP-3) is a heterotetramer composed of two large adaptins (delta-type subunit and beta-type subunit), a medium adaptin (mu-type subunit) and a small adaptin (sigma-type subunit).

Its subcellular location is the endosome membrane. Part of the AP-3 complex, an adaptor-related complex which is essential for the compartmentalization of the endocytic pathway. The polypeptide is AP-3 complex subunit sigma (ap3s1) (Dictyostelium discoideum (Social amoeba)).